A 356-amino-acid polypeptide reads, in one-letter code: S-adenosylmethionine:tRNA ribosyltransferase-isomerase (356 aa).

It belongs to the QueA family. In terms of assembly, monomer.

It is found in the cytoplasm. It catalyses the reaction 7-aminomethyl-7-carbaguanosine(34) in tRNA + S-adenosyl-L-methionine = epoxyqueuosine(34) in tRNA + adenine + L-methionine + 2 H(+). It participates in tRNA modification; tRNA-queuosine biosynthesis. In terms of biological role, transfers and isomerizes the ribose moiety from AdoMet to the 7-aminomethyl group of 7-deazaguanine (preQ1-tRNA) to give epoxyqueuosine (oQ-tRNA). In Shigella dysenteriae serotype 1 (strain Sd197), this protein is S-adenosylmethionine:tRNA ribosyltransferase-isomerase.